A 461-amino-acid polypeptide reads, in one-letter code: Elongation factor 1-alpha (461 aa).

Glycine 2 carries the n,N,N-trimethylglycine modification. Lysine 3 is subject to N6,N6-dimethyllysine; alternate. N6-methyllysine; alternate is present on lysine 3. Residues 6–241 form the tr-type G domain; it reads KTHINVVVIG…DSIEPPKRPT (236 aa). Residues 15 to 22 form a G1 region; it reads GHVDSGKS. 15–22 serves as a coordination point for GTP; it reads GHVDSGKS. At lysine 31 the chain carries N6-methyllysine. The tract at residues 71-75 is G2; it reads GITID. Lysine 80 carries the post-translational modification N6,N6,N6-trimethyllysine. The interval 92 to 95 is G3; it reads DAPG. Residues 92–96 and 154–157 contribute to the GTP site; these read DAPGH and NKMD. The G4 stretch occupies residues 154 to 157; it reads NKMD. The tract at residues 193-195 is G5; it reads SGF. Lysine 317 is modified (N6,N6-dimethyllysine; alternate). An N6-methyllysine; alternate modification is found at lysine 317. Position 391 is an N6-methyllysine (lysine 391).

Belongs to the TRAFAC class translation factor GTPase superfamily. Classic translation factor GTPase family. EF-Tu/EF-1A subfamily.

The protein localises to the cytoplasm. Its function is as follows. This protein promotes the GTP-dependent binding of aminoacyl-tRNA to the A-site of ribosomes during protein biosynthesis. In Pseudoechria curvicolla (Podospora curvicolla), this protein is Elongation factor 1-alpha (TEF).